A 1240-amino-acid chain; its full sequence is ABC transporter B family member 15 (1240 aa).

Helical transmembrane passes span 35-55, 82-102, 158-180, 184-206, 264-284, and 296-316; these read MGLGLIGAVGDGFTTPLVLLI, VALLYVACGSWVVCFLEGYCW, LPNFLMSASTFVGSYIVGFILLW, IVGLPFIVLLVIPGLMYGRALIS, GITIGSNGITFAMWGFMSWYG, and GTVFAVAAAIAIGGVSLGGGL. An ABC transmembrane type-1 1 domain is found at 35–324; it reads MGLGLIGAVG…GLSNLKYFFE (290 aa). Positions 359–595 constitute an ABC transporter 1 domain; sequence VEFKNVKFVY…IDGQYSTLVH (237 aa). 394-401 provides a ligand contact to ATP; that stretch reads GGSGSGKS. 3 N-linked (GlcNAc...) asparagine glycosylation sites follow: Asn542, Asn605, and Asn622. Positions 617–646 are disordered; the sequence is SKDIRNSSRVSTLSRSSSANSVTGPSTIKN. Residues 623–639 are compositionally biased toward low complexity; that stretch reads SSRVSTLSRSSSANSVT. Asn646 carries an N-linked (GlcNAc...) asparagine glycan. Residues 672-960 enclose the ABC transmembrane type-1 2 domain; sequence ALYGCISATL…AGSMTTDLAK (289 aa). Helical transmembrane passes span 681–701 and 714–734; these read LFGAIQPAYAYSLGSMVSVYF and IYALSFVGLAVLSFLINISQH. Asn769 is a glycosylation site (N-linked (GlcNAc...) asparagine). 4 helical membrane passes run 794-813, 817-839, 895-915, and 923-943; these read ALVVQTVSAVTIAFTMGLVI, LALVMIAVQPVIIVCFYTRRVLL, SWFAGFGLAMSQSLTSCTWAL, and LIQDGYITAKALFETFMILVS. An ABC transporter 2 domain is found at 995 to 1233; that stretch reads VEFLDVDFSY…GPTGIYFSLV (239 aa). A glycan (N-linked (GlcNAc...) asparagine) is linked at Asn1015. 1030-1037 lines the ATP pocket; sequence GPSGSGKS.

It belongs to the ABC transporter superfamily. ABCB family. Multidrug resistance exporter (TC 3.A.1.201) subfamily.

The protein localises to the membrane. In Arabidopsis thaliana (Mouse-ear cress), this protein is ABC transporter B family member 15 (ABCB15).